The sequence spans 140 residues: Profilin-1 (140 aa).

Position 2 is an N-acetylalanine (A2). At S28 the chain carries Phosphoserine. K54 is covalently cross-linked (Glycyl lysine isopeptide (Lys-Gly) (interchain with G-Cter in SUMO2); alternate). A Glycyl lysine isopeptide (Lys-Gly) (interchain with G-Cter in ubiquitin); alternate cross-link involves residue K54. S57 bears the Phosphoserine mark. K108 bears the N6-acetyllysine mark. Y129 is modified (phosphotyrosine). S138 bears the Phosphoserine; by ROCK1 mark.

Belongs to the profilin family. As to quaternary structure, found in a complex with XPO6, Ran, ACTB and PFN1. Interacts with ACTB. Interacts with VASP. Interacts with HTT. Interacts with SH3BGRL. Occurs in many kinds of cells as a complex with monomeric actin in a 1:1 ratio. Interacts with ACTMAP. Post-translationally, phosphorylation at Ser-138 reduces its affinity for G-actin and blocks its interaction with HTT, reducing its ability to inhibit androgen receptor (AR) and HTT aggregation.

The protein resides in the cytoplasm. Its subcellular location is the cytoskeleton. In terms of biological role, binds to actin and affects the structure of the cytoskeleton. At high concentrations, profilin prevents the polymerization of actin, whereas it enhances it at low concentrations. By binding to PIP2, it inhibits the formation of IP3 and DG. Inhibits androgen receptor (AR) and HTT aggregation and binding of G-actin is essential for its inhibition of AR. The sequence is that of Profilin-1 (Pfn1) from Mus musculus (Mouse).